The primary structure comprises 91 residues: uncharacterized protein (91 aa).

A run of 2 helical transmembrane segments spans residues 10–30 (VLFT…AGGI) and 46–66 (LLVA…QALS). The segment at 68-91 (MRRQDGARGTARAGRNSARRRMPS) is disordered.

Its subcellular location is the cell membrane. This is an uncharacterized protein from Sinorhizobium fredii (strain NBRC 101917 / NGR234).